Consider the following 295-residue polypeptide: Sulfotransferase 1A1 (295 aa).

48-53 (KSGTTW) serves as a coordination point for 3'-phosphoadenylyl sulfate. 106-108 (KTH) contacts substrate. The active-site Proton acceptor is His108. 3'-phosphoadenylyl sulfate-binding positions include Arg130, Ser138, Tyr193, 227–232 (TSFKEM), and 255–259 (FMRKG). Ser138 bears the Phosphoserine mark.

The protein belongs to the sulfotransferase 1 family. In terms of assembly, homodimer. As to expression, distal lung parenchyma.

It localises to the cytoplasm. The enzyme catalyses a phenol + 3'-phosphoadenylyl sulfate = an aryl sulfate + adenosine 3',5'-bisphosphate + H(+). It catalyses the reaction 17beta-estradiol + 3'-phosphoadenylyl sulfate = 17beta-estradiol 3-sulfate + adenosine 3',5'-bisphosphate + H(+). It carries out the reaction 4-ethylphenol + 3'-phosphoadenylyl sulfate = 4-ethylphenyl sulfate + adenosine 3',5'-bisphosphate + H(+). The catalysed reaction is 4-nitrophenol + 3'-phosphoadenylyl sulfate = 4-nitrophenyl sulfate + adenosine 3',5'-bisphosphate. The enzyme catalyses dopamine + 3'-phosphoadenylyl sulfate = dopamine 3-O-sulfate + adenosine 3',5'-bisphosphate + H(+). It catalyses the reaction dopamine + 3'-phosphoadenylyl sulfate = dopamine 4-O-sulfate + adenosine 3',5'-bisphosphate + H(+). It carries out the reaction 3,3',5-triiodo-L-thyronine + 3'-phosphoadenylyl sulfate = 3,3',5-triiodo-L-thyronine sulfate + adenosine 3',5'-bisphosphate + H(+). The catalysed reaction is 3,3',5'-triiodo-L-thyronine + 3'-phosphoadenylyl sulfate = 3,3',5'-triiodo-L-thyronine sulfate + adenosine 3',5'-bisphosphate + H(+). The enzyme catalyses 3,3'-diiodo-L-thyronine + 3'-phosphoadenylyl sulfate = 3,3'-diiodo-L-thyronine sulfate + adenosine 3',5'-bisphosphate + H(+). It catalyses the reaction L-thyroxine + 3'-phosphoadenylyl sulfate = L-thyroxine sulfate + adenosine 3',5'-bisphosphate + H(+). In terms of biological role, sulfotransferase that utilizes 3'-phospho-5'-adenylyl sulfate (PAPS) as sulfonate donor to catalyze the sulfate conjugation of a wide variety of acceptor molecules bearing a hydroxyl or an amine group. Sulfonation increases the water solubility of most compounds, and therefore their renal excretion, but it can also result in bioactivation to form active metabolites. Displays broad substrate specificity for small phenolic compounds. Plays an important role in the sulfonation of endogenous molecules such as steroid hormones. Mediates also the metabolic activation of carcinogenic N-hydroxyarylamines leading to highly reactive intermediates capable of forming DNA adducts, potentially resulting in mutagenesis. May play a role in gut microbiota-host metabolic interaction. O-sulfonates 4-ethylphenol (4-EP), a dietary tyrosine-derived metabolite produced by gut bacteria. The product 4-EPS crosses the blood-brain barrier and may negatively regulate oligodendrocyte maturation and myelination, affecting the functional connectivity of different brain regions associated with the limbic system. Catalyzes the sulfate conjugation of dopamine. Catalyzes the sulfation of T4 (L-thyroxine/3,5,3',5'-tetraiodothyronine), T3 (3,5,3'-triiodothyronine), rT3 (3,3',5'-triiodothyronine) and 3,3'-T2 (3,3'-diiodothyronine), with a substrate preference of 3,3'-T2 &gt; rT3 &gt; T3 &gt; T4. The sequence is that of Sulfotransferase 1A1 (SULT1A1) from Bos taurus (Bovine).